We begin with the raw amino-acid sequence, 396 residues long: Putative nickel insertion protein (396 aa).

The disordered stretch occupies residues 333 to 355 (RSKLARESQTVETPDGPAKGKTV).

The protein belongs to the LarC family.

In Rhodopirellula baltica (strain DSM 10527 / NCIMB 13988 / SH1), this protein is Putative nickel insertion protein.